The chain runs to 313 residues: Elongation factor Ts (313 aa).

The involved in Mg(2+) ion dislocation from EF-Tu stretch occupies residues 82–85; it reads TDFV.

Belongs to the EF-Ts family.

The protein localises to the cytoplasm. Its function is as follows. Associates with the EF-Tu.GDP complex and induces the exchange of GDP to GTP. It remains bound to the aminoacyl-tRNA.EF-Tu.GTP complex up to the GTP hydrolysis stage on the ribosome. This Nostoc sp. (strain PCC 7120 / SAG 25.82 / UTEX 2576) protein is Elongation factor Ts.